The primary structure comprises 114 residues: UPF0145 protein TTHA1944 (114 aa).

The protein belongs to the UPF0145 family.

The protein is UPF0145 protein TTHA1944 of Thermus thermophilus (strain ATCC 27634 / DSM 579 / HB8).